A 180-amino-acid chain; its full sequence is Large ribosomal subunit protein uL5 (180 aa).

Belongs to the universal ribosomal protein uL5 family. As to quaternary structure, part of the 50S ribosomal subunit; part of the 5S rRNA/L5/L18/L25 subcomplex. Contacts the 5S rRNA and the P site tRNA. Forms a bridge to the 30S subunit in the 70S ribosome.

Functionally, this is one of the proteins that bind and probably mediate the attachment of the 5S RNA into the large ribosomal subunit, where it forms part of the central protuberance. In the 70S ribosome it contacts protein S13 of the 30S subunit (bridge B1b), connecting the 2 subunits; this bridge is implicated in subunit movement. Contacts the P site tRNA; the 5S rRNA and some of its associated proteins might help stabilize positioning of ribosome-bound tRNAs. The protein is Large ribosomal subunit protein uL5 of Mycoplasma capricolum subsp. capricolum (strain California kid / ATCC 27343 / NCTC 10154).